The sequence spans 225 residues: Plasma membrane-associated cation-binding protein 1 (225 aa).

Residue Gly2 is the site of N-myristoyl glycine attachment. Residue Thr32 is modified to Phosphothreonine. Ser107 carries the post-translational modification Phosphoserine. Positions 140-197 (PVEEVKAEEPAKTEEPAKTEGTSGEKEEIVEETKKGETPETAVVEEKKPEVEEKKEEA) are enriched in basic and acidic residues. Positions 140–225 (PVEEVKAEEP…TAPVAEPPKP (86 aa)) are disordered. Residues Thr152 and Thr177 each carry the phosphothreonine modification.

This sequence belongs to the DREPP family. Interacts with Turnip mosaic virus (TuMV) P3N-PIPO. The cofactor is Cu(2+). In terms of tissue distribution, mostly expressed in the basal region of hypocotyls. Expressed in seedlings, roots, shoots, stems, leaves (e.g. in epidermis and vascular tissues), flowers (e.g. in pistils and anthers) and siliques (at protein level).

The protein resides in the cell membrane. The protein localises to the cytoplasm. Its subcellular location is the cytoskeleton. It is found in the cell junction. It localises to the plasmodesma. In terms of biological role, may be involved in intracellular signaling through interaction with PtdInsPs and calmodulin (CaM); may keep PtdInsPs attached to the plasma membrane until Ca(2+)-CaM reaches a competitive concentration subsequent to an increase triggered by a stimulus, thus leading to PtdInsPs release and subsequent activation of InsPs-dependent signaling cascade. Interacts competitively at the N-terminus with calcium ions and CaM (in a calcium-dependent manner), and with the phosphatidylinositol phosphates PtdIns(3,4,5)P(3), PtdIns(3,4)P(2), PtdIns(4,5)P(2) and PtdIns(3,5)P(2). Also binds weakly to PtdIns(3)P, PtdIns(4)P and PtdIns(5)P. Negative regulator of hypocotyl cell elongation by destabilizing cortical microtubules in a calcium-dependent manner. Binds directly to and destabilized microtubules to enhance microtubule depolymerization when cytoplasmic calcium increases. In case of Turnip mosaic virus (TuMV) infection, confers sensitivity by promoting viral cell-to-cell movement through interaction with viral P3N-PIPO. The chain is Plasma membrane-associated cation-binding protein 1 (PCAP1) from Arabidopsis thaliana (Mouse-ear cress).